Reading from the N-terminus, the 478-residue chain is Trigger factor (478 aa).

Over residues 154 to 167 the composition is skewed to basic and acidic residues; sequence MAKDSRSFEPREEG. 2 disordered regions span residues 154–173 and 441–478; these read MAKDSRSFEPREEGAEAQSG and KEALFAEDDEADAVTGGAATDEKPSESNNEAAADKAAG. A PPIase FKBP-type domain is found at 173–258; sequence GDRVTIDFVG…VKAVAAPGET (86 aa).

The protein belongs to the FKBP-type PPIase family. Tig subfamily.

The protein resides in the cytoplasm. It carries out the reaction [protein]-peptidylproline (omega=180) = [protein]-peptidylproline (omega=0). In terms of biological role, involved in protein export. Acts as a chaperone by maintaining the newly synthesized protein in an open conformation. Functions as a peptidyl-prolyl cis-trans isomerase. The chain is Trigger factor from Methylorubrum extorquens (strain CM4 / NCIMB 13688) (Methylobacterium extorquens).